The following is a 505-amino-acid chain: tRNA-2-methylthio-N(6)-dimethylallyladenosine synthase (505 aa).

Residues 10–126 (RSYEVRTYGC…LPALLDRARH (117 aa)) form the MTTase N-terminal domain. [4Fe-4S] cluster is bound by residues Cys-19, Cys-55, Cys-89, Cys-163, Cys-167, and Cys-170. Residues 149 to 385 (RESAYAGWVS…IALQEQITLE (237 aa)) form the Radical SAM core domain. A TRAM domain is found at 388 to 459 (QKLVGAEVEL…PHHLVADTPV (72 aa)).

It belongs to the methylthiotransferase family. MiaB subfamily. In terms of assembly, monomer. [4Fe-4S] cluster serves as cofactor.

Its subcellular location is the cytoplasm. The enzyme catalyses N(6)-dimethylallyladenosine(37) in tRNA + (sulfur carrier)-SH + AH2 + 2 S-adenosyl-L-methionine = 2-methylsulfanyl-N(6)-dimethylallyladenosine(37) in tRNA + (sulfur carrier)-H + 5'-deoxyadenosine + L-methionine + A + S-adenosyl-L-homocysteine + 2 H(+). Catalyzes the methylthiolation of N6-(dimethylallyl)adenosine (i(6)A), leading to the formation of 2-methylthio-N6-(dimethylallyl)adenosine (ms(2)i(6)A) at position 37 in tRNAs that read codons beginning with uridine. This Rhodococcus jostii (strain RHA1) protein is tRNA-2-methylthio-N(6)-dimethylallyladenosine synthase.